The primary structure comprises 270 residues: 4-hydroxy-tetrahydrodipicolinate reductase (270 aa).

Residues 8–13 (GALGRM), Asp-34, 102–104 (GTT), and 128–131 (SQNY) each bind NAD(+). The active-site Proton donor/acceptor is the His-160. (S)-2,3,4,5-tetrahydrodipicolinate is bound at residue His-161. Lys-164 functions as the Proton donor in the catalytic mechanism. (S)-2,3,4,5-tetrahydrodipicolinate is bound at residue 170-171 (GT).

It belongs to the DapB family.

The protein resides in the cytoplasm. The enzyme catalyses (S)-2,3,4,5-tetrahydrodipicolinate + NAD(+) + H2O = (2S,4S)-4-hydroxy-2,3,4,5-tetrahydrodipicolinate + NADH + H(+). It carries out the reaction (S)-2,3,4,5-tetrahydrodipicolinate + NADP(+) + H2O = (2S,4S)-4-hydroxy-2,3,4,5-tetrahydrodipicolinate + NADPH + H(+). It participates in amino-acid biosynthesis; L-lysine biosynthesis via DAP pathway; (S)-tetrahydrodipicolinate from L-aspartate: step 4/4. In terms of biological role, catalyzes the conversion of 4-hydroxy-tetrahydrodipicolinate (HTPA) to tetrahydrodipicolinate. The protein is 4-hydroxy-tetrahydrodipicolinate reductase of Methanococcus maripaludis (strain C6 / ATCC BAA-1332).